A 168-amino-acid polypeptide reads, in one-letter code: Cell division inhibitor SulA (168 aa).

The tract at residues 106–112 is ftsZ binding; sequence ALLTGNY. The segment at 161–168 is lon protease binding; sequence KIHSYLYH.

The protein belongs to the SulA family. In terms of assembly, interacts with FtsZ. In terms of processing, is rapidly cleaved and degraded by the Lon protease once DNA damage is repaired.

In terms of biological role, component of the SOS system and an inhibitor of cell division. Accumulation of SulA causes rapid cessation of cell division and the appearance of long, non-septate filaments. In the presence of GTP, binds a polymerization-competent form of FtsZ in a 1:1 ratio, thus inhibiting FtsZ polymerization and therefore preventing it from participating in the assembly of the Z ring. This mechanism prevents the premature segregation of damaged DNA to daughter cells during cell division. The sequence is that of Cell division inhibitor SulA from Yersinia pseudotuberculosis serotype O:1b (strain IP 31758).